The following is a 313-amino-acid chain: Probable GTP 3',8-cyclase (313 aa).

The Radical SAM core domain occupies 4 to 224 (VYGRELEDLR…EIRNKHKRPR (221 aa)). Arg-13 lines the GTP pocket. The [4Fe-4S] cluster site is built by Cys-20, Cys-24, and Cys-27. Position 60 (Lys-60) interacts with GTP. Gly-64 contacts S-adenosyl-L-methionine. Thr-90 is a GTP binding site. Position 114 (Ser-114) interacts with S-adenosyl-L-methionine. Lys-151 is a GTP binding site. The [4Fe-4S] cluster site is built by Cys-244 and Cys-247. 249–251 (RIR) lines the GTP pocket. Position 261 (Cys-261) interacts with [4Fe-4S] cluster.

It belongs to the radical SAM superfamily. MoaA family. [4Fe-4S] cluster is required as a cofactor.

The enzyme catalyses GTP + AH2 + S-adenosyl-L-methionine = (8S)-3',8-cyclo-7,8-dihydroguanosine 5'-triphosphate + 5'-deoxyadenosine + L-methionine + A + H(+). It participates in cofactor biosynthesis; molybdopterin biosynthesis. Functionally, catalyzes the cyclization of GTP to (8S)-3',8-cyclo-7,8-dihydroguanosine 5'-triphosphate. This is Probable GTP 3',8-cyclase from Sulfolobus acidocaldarius (strain ATCC 33909 / DSM 639 / JCM 8929 / NBRC 15157 / NCIMB 11770).